We begin with the raw amino-acid sequence, 156 residues long: Small ribosomal subunit protein uS7 (156 aa).

Belongs to the universal ribosomal protein uS7 family. As to quaternary structure, part of the 30S ribosomal subunit. Contacts proteins S9 and S11.

Its function is as follows. One of the primary rRNA binding proteins, it binds directly to 16S rRNA where it nucleates assembly of the head domain of the 30S subunit. Is located at the subunit interface close to the decoding center, probably blocks exit of the E-site tRNA. The protein is Small ribosomal subunit protein uS7 of Synechococcus sp. (strain WH7803).